Consider the following 158-residue polypeptide: Kelch repeat protein B10 (158 aa).

2 Kelch repeats span residues 25–76 (TIFV…STFG) and 77–129 (MLYF…KLNN).

Belongs to the poxviruses Kelch family.

The sequence is that of Kelch repeat protein B10 from Vaccinia virus (strain Ankara) (VACV).